The primary structure comprises 146 residues: Inner membrane protein YdgK (146 aa).

Residues 1–12 are Cytoplasmic-facing; it reads MTTTTPQRIGGW. A helical membrane pass occupies residues 13–33; sequence LLGPLAWLLVALLSTTLALLL. The Periplasmic segment spans residues 34–59; that stretch reads YTAALSSPQTFQTLGGQALTTQILWG. Residues 60–80 form a helical membrane-spanning segment; sequence VSFITAIALWYYTLWLTIAFF. At 81-89 the chain is on the cytoplasmic side; sequence KRRRCVPKH. Residues 90–110 traverse the membrane as a helical segment; the sequence is YIIWLLISVLLAVKAFAFSPV. The Periplasmic segment spans residues 111–112; that stretch reads ED. Residues 113–133 traverse the membrane as a helical segment; it reads GIAVRQLLFTLLATALIVPYF. The Cytoplasmic segment spans residues 134-146; that stretch reads KRSSRVKATFVNP.

This sequence to Synechocystis PCC 6803 sll0481.

Its subcellular location is the cell inner membrane. The polypeptide is Inner membrane protein YdgK (ydgK) (Escherichia coli (strain K12)).